The sequence spans 436 residues: GTPase Der (436 aa).

EngA-type G domains are found at residues 4–167 (PIVA…PDEA) and 175–351 (IRFS…DNHR). GTP-binding positions include 10–17 (GRPNVGKS), 57–61 (DTGGI), 119–122 (NKVD), 181–188 (GRPNVGKS), 229–233 (DTAGM), and 294–297 (NKWD). In terms of domain architecture, KH-like spans 352–436 (KRITSSTLND…PIKLIVRARK (85 aa)).

Belongs to the TRAFAC class TrmE-Era-EngA-EngB-Septin-like GTPase superfamily. EngA (Der) GTPase family. In terms of assembly, associates with the 50S ribosomal subunit.

GTPase that plays an essential role in the late steps of ribosome biogenesis. The polypeptide is GTPase Der (Leuconostoc mesenteroides subsp. mesenteroides (strain ATCC 8293 / DSM 20343 / BCRC 11652 / CCM 1803 / JCM 6124 / NCDO 523 / NBRC 100496 / NCIMB 8023 / NCTC 12954 / NRRL B-1118 / 37Y)).